Consider the following 392-residue polypeptide: MERRAGSRLRAWMLLLLLCPVQGRQKDSGSKWKVFLDQINRALENYEPCSSQNCSCYHGVIEEDLTPFRGGISRKMMAEVVRRKLGTHYQIIKNRLFREDDCMFPSRCSGVEHFILEVIHRLPDMEMVINVRDYPQVPKWMEPTIPVFSFSKTSEYHDIMYPAWTFWEGGPAVWPLYPTGLGRWDLFREDLLRSAAQWPWEKKNSTAYFRGSRTSPERDPLILLSRKNPKLVDAEYTKNQAWKSMKDTLGKPAAKDVHLIDHCKYRYLFNFRGVAASFRFKHLFLCGSLVFHVGDEWVEFFYPQLKPWVHYIPVKTDLSNVQELLQFVKANDDIAQEIAKRGSQFIINHLQMDDITCYWENLLTDYSKFLSYNVTRRKDYYQIVPRRLKTEL.

The N-terminal stretch at 1 to 23 is a signal peptide; it reads MERRAGSRLRAWMLLLLLCPVQG. 4 disulfides stabilise this stretch: Cys49–Cys56, Cys54–Cys357, Cys102–Cys108, and Cys263–Cys286. N-linked (GlcNAc...) asparagine glycosylation occurs at Asn53. The interval 103–107 is interaction with the consensus sequence C-X-S-X-[PA]-C in peptide substrates; it reads MFPSR. The Proton donor/acceptor role is filled by Asp133. An interaction with the consensus sequence C-X-S-X-[PA]-C in peptide substrates region spans residues 172–178; sequence AVWPLYP. Tyr177 is a UDP-alpha-D-glucose binding site. Asn204 carries N-linked (GlcNAc...) asparagine glycosylation. UDP-alpha-D-glucose contacts are provided by residues Ser212, Arg218, and 274 to 279; that span reads VAASFR. N-linked (GlcNAc...) asparagine glycosylation occurs at Asn373. The Prevents secretion from ER motif lies at 389-392; that stretch reads KTEL.

Belongs to the glycosyltransferase 90 family. As to expression, widely expressed in newborn and adult tissues (at protein level).

The protein resides in the endoplasmic reticulum lumen. The enzyme catalyses L-seryl-[EGF-like domain protein] + UDP-alpha-D-xylose = 3-O-(beta-D-xylosyl)-L-seryl-[EGF-like domain protein] + UDP + H(+). The catalysed reaction is L-seryl-[EGF-like domain protein] + UDP-alpha-D-glucose = 3-O-(beta-D-glucosyl)-L-seryl-[EGF-like domain protein] + UDP + H(+). It participates in protein modification; protein glycosylation. Its function is as follows. Dual specificity glycosyltransferase that catalyzes the transfer of glucose and xylose from UDP-glucose and UDP-xylose, respectively, to a serine residue found in the consensus sequence of C-X-S-X-P-C. Specifically targets extracellular EGF repeats of protein such as CRB2, F7, F9 and NOTCH2. Acts as a positive regulator of Notch signaling by mediating O-glucosylation of Notch, leading to regulate muscle development. Notch glucosylation does not affect Notch ligand binding. Required during early development to promote gastrulation: acts by mediating O-glucosylation of CRB2, which is required for CRB2 localization to the cell membrane. The protein is Protein O-glucosyltransferase 1 of Mus musculus (Mouse).